The following is a 290-amino-acid chain: Tegument protein VP22 (290 aa).

The segment covering 98–112 (STSHGRLSPTKTTPH) has biased composition (polar residues). The disordered stretch occupies residues 98–156 (STSHGRLSPTKTTPHPKSAGVTPPQRVPARPATRAAAPSATPTQPDCVAKQRTSPGVNS). Positions 118 to 142 (VTPPQRVPARPATRAAAPSATPTQP) are enriched in low complexity. Residues 146 to 149 (AKQR) carry the Nuclear localization signal motif. Residues 219 to 231 (LDRFLKAAAIRIL) carry the Nuclear export signal motif.

The protein belongs to the alphaherpesvirinae VP22 tegument protein family. Interacts with gE (via C-terminus); this interaction is necessary for the recruitment of VP22 to the Golgi and its packaging into virions. Interacts with gM (via C-terminus). Interacts with VP16; this interaction allows the formation of a tripartite complex composed of VP16, VP22 and UL41/VHS. Interacts with the capsid-binding protein UL16. Interacts with host CGAS. In terms of processing, highly phosphorylated in the host cell. Packaging is selective for underphosphorylated forms.

It is found in the virion tegument. The protein resides in the host cytoplasm. The protein localises to the host nucleus. It localises to the host Golgi apparatus. Tegument protein that plays different roles during the time course of infection. Participates in both the accumulation of viral mRNAs and viral protein translation at late time of infection. Modulates the RNase activity of the virion host shutoff protein UL41 probably to ensure necessary levels of key cellular mRNAs and proteins. Plays a role in microtubule reorganization that occurs after viral infection by stabilizing microtubule network. Plays a role in the inhibition of host innate immune system by targeting the CGAS enzymatic activity which is the principal cytosolic DNA sensor that detects invading viral DNA. Acts by mediating disruption of liquid-like droplets in which CGAS is activated, thereby preventing CGAS activity. This chain is Tegument protein VP22 (11), found in Equus caballus (Horse).